A 353-amino-acid chain; its full sequence is Thiamine-phosphate synthase (353 aa).

Positions 1-128 (MKSMPFAPIA…AASAAAIRYG (128 aa)) are unknown. A thiamine-phosphate synthase region spans residues 129–353 (LYDLEVTVLQ…TSLQLLEALR (225 aa)). Residues 185–189 (QYRNK) and Asn-217 contribute to the 4-amino-2-methyl-5-(diphosphooxymethyl)pyrimidine site. 2 residues coordinate Mg(2+): Asp-218 and Asp-237. Ser-256 serves as a coordination point for 4-amino-2-methyl-5-(diphosphooxymethyl)pyrimidine. Position 282–284 (282–284 (TAT)) interacts with 2-[(2R,5Z)-2-carboxy-4-methylthiazol-5(2H)-ylidene]ethyl phosphate. Lys-285 contacts 4-amino-2-methyl-5-(diphosphooxymethyl)pyrimidine. 2-[(2R,5Z)-2-carboxy-4-methylthiazol-5(2H)-ylidene]ethyl phosphate is bound at residue Gly-312.

It belongs to the thiamine-phosphate synthase family. Requires Mg(2+) as cofactor.

The enzyme catalyses 2-[(2R,5Z)-2-carboxy-4-methylthiazol-5(2H)-ylidene]ethyl phosphate + 4-amino-2-methyl-5-(diphosphooxymethyl)pyrimidine + 2 H(+) = thiamine phosphate + CO2 + diphosphate. The catalysed reaction is 2-(2-carboxy-4-methylthiazol-5-yl)ethyl phosphate + 4-amino-2-methyl-5-(diphosphooxymethyl)pyrimidine + 2 H(+) = thiamine phosphate + CO2 + diphosphate. It catalyses the reaction 4-methyl-5-(2-phosphooxyethyl)-thiazole + 4-amino-2-methyl-5-(diphosphooxymethyl)pyrimidine + H(+) = thiamine phosphate + diphosphate. It functions in the pathway cofactor biosynthesis; thiamine diphosphate biosynthesis; thiamine phosphate from 4-amino-2-methyl-5-diphosphomethylpyrimidine and 4-methyl-5-(2-phosphoethyl)-thiazole: step 1/1. In terms of biological role, condenses 4-methyl-5-(beta-hydroxyethyl)thiazole monophosphate (THZ-P) and 2-methyl-4-amino-5-hydroxymethyl pyrimidine pyrophosphate (HMP-PP) to form thiamine monophosphate (TMP). This Prochlorococcus marinus (strain MIT 9313) protein is Thiamine-phosphate synthase.